A 985-amino-acid polypeptide reads, in one-letter code: Eukaryotic translation initiation factor 4E transporter (985 aa).

Residues 1 to 24 (MDRRSMGETESGDAFLDLKKPPAS) form a disordered region. Serine 5 bears the Phosphoserine mark. The short motif at 30–36 (YTKEELL) is the YXXXXLphi motif element. A phosphoserine mark is found at serine 74, serine 78, serine 115, serine 120, serine 136, and serine 138. The interval 131–161 (VSSRRSGSPLEKDSDGLRLLGGRRIGSGRII) is interaction with CSDE1. Positions 195-211 (RREFGDSKRVFGERRRN) match the Nuclear localization signal motif. The tract at residues 208–230 (RRRNDSYTEEEPEWFSAGPTSQS) is disordered. The tract at residues 219-240 (PEWFSAGPTSQSETIELTGFDD) is interaction with DDX6. Serine 301, serine 345, serine 353, and serine 374 each carry phosphoserine. Residue lysine 410 forms a Glycyl lysine isopeptide (Lys-Gly) (interchain with G-Cter in SUMO2) linkage. Phosphoserine is present on serine 417. Positions 438–447 (VEAGLKGLKV) match the Nuclear export signal motif. The tract at residues 448 to 490 (DQQVKNSTPFMAEHLEETLSAVTNNRQLKKDGDMTAFNKLVST) is interaction with LSM14A. The residue at position 486 (lysine 486) is an N6-acetyllysine. 3 positions are modified to phosphoserine: serine 513, serine 564, and serine 587. The Nuclear export signal motif lies at 613 to 638 (ITAQMSQLELQQAALEGLALPHDLAV). Disordered stretches follow at residues 664–693 (QQRV…SMLS) and 707–803 (ESKE…PTTP). At serine 693 the chain carries Phosphoserine. Residues 695-713 (SFTPTSVIRKMYESKEKSK) are interaction with PATL1. 2 stretches are compositionally biased toward basic and acidic residues: residues 707 to 717 (ESKEKSKEEPA) and 725 to 735 (DSKEDTQKASE). The segment covering 736-746 (ENLLSSSSVPS) has biased composition (low complexity). At serine 752 the chain carries Phosphoserine. The span at 754–776 (TTNSKLSALQRSSCSTPLSQANR) shows a compositional bias: polar residues. 2 positions are modified to phosphoserine: serine 920 and serine 951. The interval 922–953 (QTTPQNVPSRSGLPHMHSQLEHRPSQRSSSPV) is disordered. The segment at 940 to 985 (QLEHRPSQRSSSPVGLAKWFGSDVLQQPLPSMPAKVISVDELEYRQ) is interaction with LSM14A.

It belongs to the 4E-T/EIF4E-T family. Interacts (via YXXXXLphi motif) with EIF4E. Interacts (via YXXXXLphi motif) with EIF4E2. Interacts with DDX6. Interacts with CSDE1/UNR. Interacts with CNOT1; promoting association with the CCR4-NOT complex. Interacts with LSM14A; promoting EIF4ENIF1 localization to P-bodies. Interacts with PATL1. Interacts with importin beta only in the presence of importin alpha, suggesting a direct interaction with importin alpha. Interacts with APOBEC3G in an RNA-dependent manner. Phosphorylation by MAPK8/JNK1 and or MAPK9/JNK2 in response to oxidative stress promotes P-body assembly. Phosphorylated during meiotic maturation. Widely expressed.

The protein resides in the cytoplasm. Its subcellular location is the P-body. The protein localises to the nucleus. It is found in the PML body. It localises to the nucleus speckle. EIF4E-binding protein that regulates translation and stability of mRNAs in processing bodies (P-bodies). Plays a key role in P-bodies to coordinate the storage of translationally inactive mRNAs in the cytoplasm and prevent their degradation. Acts as a binding platform for multiple RNA-binding proteins: promotes deadenylation of mRNAs via its interaction with the CCR4-NOT complex, and blocks decapping via interaction with eIF4E (EIF4E and EIF4E2), thereby protecting deadenylated and repressed mRNAs from degradation. Component of a multiprotein complex that sequesters and represses translation of proneurogenic factors during neurogenesis. Promotes miRNA-mediated translational repression. Required for the formation of P-bodies. Involved in mRNA translational repression mediated by the miRNA effector TNRC6B by protecting TNRC6B-targeted mRNAs from decapping and subsequent decay. Also acts as a nucleoplasmic shuttling protein, which mediates the nuclear import of EIF4E and DDX6 by a piggy-back mechanism. The polypeptide is Eukaryotic translation initiation factor 4E transporter (Homo sapiens (Human)).